Consider the following 328-residue polypeptide: Telomere-binding protein cav (328 aa).

The required for binding to Su(var)205 stretch occupies residues 107–320; the sequence is RRKMVQPYPE…NISLQNSGSE (214 aa). The interval 139–228 is disordered; it reads DRWQKQKSQN…EFQTEHTDCP (90 aa). 2 stretches are compositionally biased toward polar residues: residues 144 to 167 and 180 to 189; these read QKSQNRSAPESSSALVGHASQQDS and ANTNRYSVSQ. 2 consecutive short sequence motifs (su(var)205-binding Pro-containing repeat) follow at residues 228–232 and 281–287; these read PETQM and PETETNE. Residues 295 to 319 are compositionally biased toward polar residues; the sequence is INSESMSIGPSIDSEGNISLQNSGS. The interval 295-328 is disordered; sequence INSESMSIGPSIDSEGNISLQNSGSEPIDVDSMA.

In terms of assembly, interacts (via C-terminus) with Su(var)205 dimer (via hinge and chromoshadow domain) and with moi to form the terminin, telomere-capping, complex. Interacts with HP6, which is also part of the terminin complex.

Its subcellular location is the nucleus. The protein localises to the chromosome. It localises to the telomere. In terms of biological role, binds to chromosome ends in a sequence-dependent manner and is required for telomere capping. In Drosophila erecta (Fruit fly), this protein is Telomere-binding protein cav.